The following is a 234-amino-acid chain: Small ribosomal subunit protein eS1y (234 aa).

Positions 1-18 are enriched in basic residues; that stretch reads MAVGKNKRISKGKKGGKK. The interval 1–20 is disordered; that stretch reads MAVGKNKRISKGKKGGKKKA.

The protein belongs to the eukaryotic ribosomal protein eS1 family. Component of the small ribosomal subunit. Mature ribosomes consist of a small (40S) and a large (60S) subunit. The 40S subunit contains about 33 different proteins and 1 molecule of RNA (18S). The 60S subunit contains about 49 different proteins and 3 molecules of RNA (25S, 5.8S and 5S).

It is found in the cytoplasm. This Vitis vinifera (Grape) protein is Small ribosomal subunit protein eS1y.